The chain runs to 226 residues: Ribonuclease 3 (226 aa).

Positions 6-128 constitute an RNase III domain; the sequence is IQKLQKILGY…LIGSIFLDSN (123 aa). Glutamate 41 provides a ligand contact to Mg(2+). Aspartate 45 is an active-site residue. Positions 114 and 117 each coordinate Mg(2+). Residue glutamate 117 is part of the active site. The DRBM domain maps to 155–225; it reads DPKTRLQEYL…AQNALIKLGI (71 aa).

Belongs to the ribonuclease III family. Homodimer. It depends on Mg(2+) as a cofactor.

The protein resides in the cytoplasm. It catalyses the reaction Endonucleolytic cleavage to 5'-phosphomonoester.. Digests double-stranded RNA. Involved in the processing of primary rRNA transcript to yield the immediate precursors to the large and small rRNAs (23S and 16S). Processes some mRNAs, and tRNAs when they are encoded in the rRNA operon. Processes pre-crRNA and tracrRNA of type II CRISPR loci if present in the organism. The sequence is that of Ribonuclease 3 from Buchnera aphidicola subsp. Baizongia pistaciae (strain Bp).